The sequence spans 100 residues: TACTTTQQTAAFVALVSVLSTDNFNQCSTDSGYSMLTATALPTTEQYTKMCASTACQGMIQTIIAANAPDCELTVPTSGLVLNVYEYANGFSAKCSSLSS.

Disulfide bonds link Cys3–Cys71, Cys27–Cys56, and Cys51–Cys95.

It belongs to the elicitin family.

The protein localises to the secreted. In terms of biological role, induces local and distal defense responses (incompatible hypersensitive reaction) in plants from the solanaceae and cruciferae families. Elicits leaf necrosis and causes the accumulation of pathogenesis-related proteins. Might interact with the lipidic molecules of the plasma membrane. This Phytopythium vexans (Damping-off fungus) protein is Elicitin Vex2.